The following is a 556-amino-acid chain: Set1/Ash2 histone methyltransferase complex subunit ASH2 (556 aa).

Residues 1-19 are compositionally biased toward polar residues; the sequence is MEDSQMDTSSPTESSSEVN. Residues 1–27 form a disordered region; the sequence is MEDSQMDTSSPTESSSEVNFTAEEDKS. The segment at 34-90 adopts a PHD-type zinc-finger fold; sequence AGVCYCGKERNLNIVELLCATCSRWVHETCVSYQLGKGKLLPFITNYVFVCKNCSAS. Zn(2+)-binding residues include cysteine 37, cysteine 39, cysteine 52, cysteine 55, histidine 60, cysteine 63, cysteine 84, and cysteine 87. The tract at residues 216-251 is disordered; that stretch reads ASLSKNNRQKRKFPGTDSGPTGKKGRPSSDITANVK. The B30.2/SPRY domain maps to 288-510; the sequence is SSDWAGKPIP…VSVNFGPAFK (223 aa).

As to quaternary structure, core component of several methyltransferase-containing complexes. Component of the SET1C/COMPASS complex, composed at least of the catalytic subunit Set1, wds/WDR5, Wdr82, Rbbp5, ash2, Cfp1/CXXC1, hcf and Dpy-30L1. Component of the MLL3/4 (Histone-lysine N-methyltransferase/demethylase TRR) complex composed at least of the catalytic subunit trr, ash2, Rbbp5, Dpy-30L1, wds, hcf, ptip, Pa1, Utx, Lpt and Ncoa6. Interacts with hcf. Interacts with trr. In terms of assembly, interacts (via B30.2/SPRY domain) with sktl; the interaction is direct. As to expression, in larvae and pupae, expressed in imaginal disks, salivary gland and fat body cells. No expression detected in central nervous system (at protein level).

It localises to the nucleus. The protein localises to the chromosome. Transcriptional regulator. Regulates a number of genes involved in wing development including activation of net and bs and repression of rho and kni and controls vein-intervein patterning during wing development. Required for correct expression of a number of homeotic genes including Scr in the first leg imaginal disk and Ubx in the third leg imaginal disk and haltere disks. Required for stabilization of the histone-lysine N-methyltransferase trr and for trimethylation of 'Lys-4' of histone H3. Together with sktl probably plays a role in maintenance of transcriptionally active chromatin through down-regulation of histone H1 hyperphosphorylation. The protein is Set1/Ash2 histone methyltransferase complex subunit ASH2 of Drosophila melanogaster (Fruit fly).